A 388-amino-acid polypeptide reads, in one-letter code: F-box protein At4g00893 (388 aa).

The tract at residues 1 to 30 (MLPSPSVHMASPPPSLNMASHPPSPATASR) is disordered. Positions 42-88 (NPSFADLPSSLIEEIMLLLVLKDNIRASAACKSWYEAGVSVRVVDKH) constitute an F-box domain.

The protein is F-box protein At4g00893 of Arabidopsis thaliana (Mouse-ear cress).